The chain runs to 239 residues: tRNA (guanine-N(7)-)-methyltransferase (239 aa).

The S-adenosyl-L-methionine site is built by Glu-69, Glu-94, Asp-121, and Asp-144. Asp-144 is an active-site residue. Substrate contacts are provided by residues Lys-148, Asp-180, and 217–220; that span reads TKFE.

Belongs to the class I-like SAM-binding methyltransferase superfamily. TrmB family. As to quaternary structure, monomer.

The catalysed reaction is guanosine(46) in tRNA + S-adenosyl-L-methionine = N(7)-methylguanosine(46) in tRNA + S-adenosyl-L-homocysteine. It functions in the pathway tRNA modification; N(7)-methylguanine-tRNA biosynthesis. Catalyzes the formation of N(7)-methylguanine at position 46 (m7G46) in tRNA. This Buchnera aphidicola subsp. Acyrthosiphon pisum (strain 5A) protein is tRNA (guanine-N(7)-)-methyltransferase.